Reading from the N-terminus, the 501-residue chain is uncharacterized protein (501 aa).

It belongs to the UbiD family.

This is an uncharacterized protein from Synechocystis sp. (strain ATCC 27184 / PCC 6803 / Kazusa).